Reading from the N-terminus, the 386-residue chain is Bifunctional enzyme IspD/IspF (386 aa).

A 2-C-methyl-D-erythritol 4-phosphate cytidylyltransferase region spans residues 1 to 226 (MATPSPLPSF…EDFMADLLPV (226 aa)). The interval 227 to 386 (RVGTGFDVHK…ATVVRKDTPA (160 aa)) is 2-C-methyl-D-erythritol 2,4-cyclodiphosphate synthase. A divalent metal cation contacts are provided by Asp-233 and His-235. Residues 233 to 235 (DVH) and 259 to 260 (HS) each bind 4-CDP-2-C-methyl-D-erythritol 2-phosphate. His-267 provides a ligand contact to a divalent metal cation. 4-CDP-2-C-methyl-D-erythritol 2-phosphate-binding positions include 281 to 283 (DIG), 357 to 360 (TTTE), Phe-364, and Arg-367.

In the N-terminal section; belongs to the IspD/TarI cytidylyltransferase family. IspD subfamily. This sequence in the C-terminal section; belongs to the IspF family. It depends on a divalent metal cation as a cofactor.

The enzyme catalyses 2-C-methyl-D-erythritol 4-phosphate + CTP + H(+) = 4-CDP-2-C-methyl-D-erythritol + diphosphate. It carries out the reaction 4-CDP-2-C-methyl-D-erythritol 2-phosphate = 2-C-methyl-D-erythritol 2,4-cyclic diphosphate + CMP. The protein operates within isoprenoid biosynthesis; isopentenyl diphosphate biosynthesis via DXP pathway; isopentenyl diphosphate from 1-deoxy-D-xylulose 5-phosphate: step 2/6. It participates in isoprenoid biosynthesis; isopentenyl diphosphate biosynthesis via DXP pathway; isopentenyl diphosphate from 1-deoxy-D-xylulose 5-phosphate: step 4/6. Functionally, bifunctional enzyme that catalyzes the formation of 4-diphosphocytidyl-2-C-methyl-D-erythritol from CTP and 2-C-methyl-D-erythritol 4-phosphate (MEP) (IspD), and catalyzes the conversion of 4-diphosphocytidyl-2-C-methyl-D-erythritol 2-phosphate (CDP-ME2P) to 2-C-methyl-D-erythritol 2,4-cyclodiphosphate (ME-CPP) with a corresponding release of cytidine 5-monophosphate (CMP) (IspF). The chain is Bifunctional enzyme IspD/IspF from Erythrobacter litoralis (strain HTCC2594).